The following is a 41-amino-acid chain: Photosystem II reaction center protein L (41 aa).

The helical transmembrane segment at 20 to 40 (SLYLGLLLVFVVGLLFSSYFL) threads the bilayer.

It belongs to the PsbL family. In terms of assembly, PSII is composed of 1 copy each of membrane proteins PsbA, PsbB, PsbC, PsbD, PsbE, PsbF, PsbH, PsbI, PsbJ, PsbK, PsbL, PsbM, PsbT, PsbX, PsbY, PsbZ, Psb30/Ycf12, peripheral proteins PsbO, CyanoQ (PsbQ), PsbU, PsbV and a large number of cofactors. It forms dimeric complexes.

The protein resides in the cellular thylakoid membrane. One of the components of the core complex of photosystem II (PSII). PSII is a light-driven water:plastoquinone oxidoreductase that uses light energy to abstract electrons from H(2)O, generating O(2) and a proton gradient subsequently used for ATP formation. It consists of a core antenna complex that captures photons, and an electron transfer chain that converts photonic excitation into a charge separation. This subunit is found at the monomer-monomer interface and is required for correct PSII assembly and/or dimerization. The protein is Photosystem II reaction center protein L of Synechococcus sp. (strain JA-3-3Ab) (Cyanobacteria bacterium Yellowstone A-Prime).